The following is a 140-amino-acid chain: General stress protein 26 (140 aa).

This Bacillus subtilis (strain 168) protein is General stress protein 26 (ydaG).